A 162-amino-acid polypeptide reads, in one-letter code: uncharacterized protein (162 aa).

One can recognise an HTH asnC-type domain in the interval 6–71 (LDDLDRAILK…PIKPRKLALV (66 aa)). Residues 25 to 44 (IAEISNQLKKPESTVHFRIK) constitute a DNA-binding region (H-T-H motif).

This is an uncharacterized protein from Pyrococcus abyssi (strain GE5 / Orsay).